The following is a 395-amino-acid chain: NADH-quinone oxidoreductase subunit D (395 aa).

It belongs to the complex I 49 kDa subunit family. In terms of assembly, NDH-1 is composed of 14 different subunits. Subunits NuoB, C, D, E, F, and G constitute the peripheral sector of the complex.

It localises to the cell inner membrane. It catalyses the reaction a quinone + NADH + 5 H(+)(in) = a quinol + NAD(+) + 4 H(+)(out). NDH-1 shuttles electrons from NADH, via FMN and iron-sulfur (Fe-S) centers, to quinones in the respiratory chain. The immediate electron acceptor for the enzyme in this species is believed to be a menaquinone. Couples the redox reaction to proton translocation (for every two electrons transferred, four hydrogen ions are translocated across the cytoplasmic membrane), and thus conserves the redox energy in a proton gradient. The sequence is that of NADH-quinone oxidoreductase subunit D from Chlorobium luteolum (strain DSM 273 / BCRC 81028 / 2530) (Pelodictyon luteolum).